The following is an 88-amino-acid chain: MGTARFLSAVLLLSVLLMVTFPALLSAEYHDGRVDICSLPSDSGDRLRFFEMWYFDGTTCTKFVYGGYGGNDNRFPTEKACMKRCAKA.

The signal sequence occupies residues M1 to A27. The propeptide occupies E28–R33. The BPTI/Kunitz inhibitor domain maps to C37–C85. 2 disulfide bridges follow: C37-C85 and C60-C81.

This sequence belongs to the venom Kunitz-type family. 03 (sub-Kunitz) subfamily. As to expression, expressed by the venom gland.

The protein resides in the secreted. Serine protease inhibitor that inhibits trypsin (Ki=9.61 nM), kallikrein (Ki=24.8 nM), and chymotrypsin. The polypeptide is Kunitz-type U15-theraphotoxin-Hs1e (Cyriopagopus schmidti (Chinese bird spider)).